Consider the following 409-residue polypeptide: Nucleoprotein (409 aa).

Disordered stretches follow at residues 1 to 32 (MASG…SSGN), 47 to 84 (PQPK…KSGR), 121 to 145 (ADTK…LRFS), and 164 to 194 (RSGR…GAED). The tract at residues 29-160 (SSGNASWFQA…GNFRWDFIPL (132 aa)) is RNA-binding. The CoV N NTD domain maps to 31–156 (GNASWFQAIK…GGPDGNFRWD (126 aa)). Over residues 57–68 (PDNNNIKPSQQH) the composition is skewed to polar residues. Positions 70-84 (YWRRQARYKPGKSGR) are enriched in basic residues. A compositionally biased stretch (low complexity) spans 164–179 (RSGRSTAASSAASSRA). Residues 180 to 192 (PSREGSRGRRSGA) are compositionally biased toward basic and acidic residues. S190 is modified (phosphoserine; by host). Residues 215-331 (TKAKADEMAH…QCVDGVGTRP (117 aa)) form the CoV N CTD domain. The tract at residues 226-333 (RYCKRTIPPG…VDGVGTRPKD (108 aa)) is dimerization. The cysteines at positions 320 and 323 are disulfide-linked. The interval 326-409 (GVGTRPKDDE…GDSALGENEL (84 aa)) is disordered. Positions 358–367 (QRPKKEKKPK) are enriched in basic residues. Residues 368 to 384 (KQDDEVDKALTSDEERN) are compositionally biased toward basic and acidic residues. T378 is subject to Phosphothreonine; by host. The residue at position 379 (S379) is a Phosphoserine; by host.

It belongs to the gammacoronavirus nucleocapsid protein family. In terms of assembly, homooligomer. Both monomeric and oligomeric forms interact with RNA. Interacts with protein M. Interacts with NSP3; this interaction serves to tether the genome to the newly translated replicase-transcriptase complex at a very early stage of infection. Post-translationally, ADP-ribosylated. The ADP-ribosylation is retained in the virion during infection. In terms of processing, phosphorylated on serine and threonine residues.

It localises to the virion. The protein resides in the host endoplasmic reticulum-Golgi intermediate compartment. Its subcellular location is the host Golgi apparatus. Functionally, packages the positive strand viral genome RNA into a helical ribonucleocapsid (RNP) and plays a fundamental role during virion assembly through its interactions with the viral genome and membrane protein M. Plays an important role in enhancing the efficiency of subgenomic viral RNA transcription as well as viral replication. The protein is Nucleoprotein of Gallus gallus (Chicken).